The chain runs to 646 residues: MSDIPSGALEADESRAVSLLSRVILPRPGEPLDVRKLYIEESTTNSRRAHAPTRTSLEIGPESEVSFATYFNAFPASYWRRWSTLDTVVLRVELTGTARVDVYRSKATGARITVGGAPVAGEGDGPAAVEFEIDLTPFEDGGWIWFDITTNTAVRVHSAGWYAPVPAPGRANVAVGIPTFNRPADCVNALAALTSDPLVDEVISAVIVSDQGTSKAKDHPGFADAAARLGDRLSIHNQPNLGGSGGYSRVMYEALKNTDCEQILFMDDDIRIEPDSILRALAMNRFAKSPILVGGQMLNLQEPSHLHVMGEVVDRANFMWTAAPNAEYDHDFAKFKLSDAEEPRTKLLHRRVDVDFNGWWMCMIPRQIAEELGQPLPLFIKWDDAEYGLRAGEHGYGTVTLPGAAIWHMAWSDKDDAIDWQAYFHLRNRLVVAALHWDGPVSGLIASHLKATIKHLLCLEYSTVAIQNKAMEDFLAGPENLFSILESAMPDVRKLRSQYPDAVVLPGATSLPPASDMRRKKIAIPVSKPAIAVNLARGVVHQLRSHDPETHVRPQINVATQDARWFSLCRVDGVTVTTADGRGVVYRQRDRAKMFALLRASLRQQARLARKFDRMRKVYRDALPMLTSTQKWESVLLTETPEKVGR.

Residues arginine 182, glutamine 211, asparagine 240, and aspartate 267 each contribute to the UDP-alpha-D-galactofuranose site. Residues aspartate 267 and aspartate 269 each contribute to the Mn(2+) site. Aspartate 384 functions as the Proton acceptor in the catalytic mechanism. A Mn(2+)-binding site is contributed by histidine 408.

Belongs to the glycosyltransferase 2 family. As to quaternary structure, homotetramer. It depends on Mn(2+) as a cofactor. The cofactor is Mg(2+).

Its subcellular location is the cell membrane. It catalyses the reaction beta-D-galactofuranosyl-(1-&gt;5)-beta-D-galactofuranosyl-(1-&gt;4)-alpha-L-rhamnosyl-(1-&gt;3)-N-acetyl-alpha-D-glucosaminyl-diphospho-trans,octa-cis-decaprenol + 28 UDP-alpha-D-galactofuranose = [beta-D-galactofuranosyl-(1-&gt;5)-beta-D-galactofuranosyl-(1-&gt;6)]14-beta-D-galactofuranosyl-(1-&gt;5)-beta-D-galactofuranosyl-(1-&gt;4)-alpha-L-rhamnopyranosyl-(1-&gt;3)-N-acetyl-alpha-D-glucosaminyl-diphospho-trans,octa-cis-decaprenol + 28 UDP + 28 H(+). It functions in the pathway cell wall biogenesis; cell wall polysaccharide biosynthesis. Its function is as follows. Involved in the galactan polymerization of the arabinogalactan (AG) region of the mycolylarabinogalactan-peptidoglycan (mAGP) complex, an essential component of the mycobacteria cell wall. Thus, successively transfers approximately 28 galactofuranosyl (Galf) residues from UDP-galactofuranose (UDP-Galf) onto the galactofuranosyl-galactofuranosyl-rhamnosyl-GlcNAc-diphospho-decaprenol (Galf-Galf-Rha-GlcNAc-PP-C50) acceptor produced by GlfT1, with alternating 1-&gt;5 and 1-&gt;6 links, forming a galactan domain with approximately 30 galactofuranosyl residues. The polypeptide is Galactofuranosyltransferase GlfT2 (Mycolicibacterium smegmatis (strain ATCC 700084 / mc(2)155) (Mycobacterium smegmatis)).